Consider the following 526-residue polypeptide: Lysine--tRNA ligase (526 aa).

Positions 431 and 438 each coordinate Mg(2+).

This sequence belongs to the class-II aminoacyl-tRNA synthetase family. In terms of assembly, homodimer. Mg(2+) is required as a cofactor.

It is found in the cytoplasm. The enzyme catalyses tRNA(Lys) + L-lysine + ATP = L-lysyl-tRNA(Lys) + AMP + diphosphate. This is Lysine--tRNA ligase (lysS) from Chlamydia trachomatis serovar D (strain ATCC VR-885 / DSM 19411 / UW-3/Cx).